The following is a 118-amino-acid chain: MLRHMLKSKIHRAVVTDANLNYVGSITIDRDLMDAADILENEKVTIVNNNNGARFDTYVIEGERGSKVICLNGAASRLVQKGDVVIILTYTVLQDEECHNHKPRLVFMDGNNNIKELG.

The active-site Schiff-base intermediate with substrate; via pyruvic acid is S25. A Pyruvic acid (Ser) modification is found at S25. Position 57 (T57) interacts with substrate. Y58 acts as the Proton donor in catalysis. 73-75 (GAA) is a binding site for substrate.

This sequence belongs to the PanD family. In terms of assembly, heterooctamer of four alpha and four beta subunits. Pyruvate is required as a cofactor. In terms of processing, is synthesized initially as an inactive proenzyme, which is activated by self-cleavage at a specific serine bond to produce a beta-subunit with a hydroxyl group at its C-terminus and an alpha-subunit with a pyruvoyl group at its N-terminus.

Its subcellular location is the cytoplasm. The catalysed reaction is L-aspartate + H(+) = beta-alanine + CO2. It participates in cofactor biosynthesis; (R)-pantothenate biosynthesis; beta-alanine from L-aspartate: step 1/1. Functionally, catalyzes the pyruvoyl-dependent decarboxylation of aspartate to produce beta-alanine. This chain is Aspartate 1-decarboxylase, found in Syntrophomonas wolfei subsp. wolfei (strain DSM 2245B / Goettingen).